The following is a 173-amino-acid chain: Membrane protein PM19L (173 aa).

A run of 4 helical transmembrane segments spans residues 9-29 (IAPL…FASW), 43-63 (GVAG…AGVV), 83-103 (LAAG…AFGL), and 124-144 (FVII…GGLF).

As to expression, expressed in roots, leaf blades, leaf sheaths, stems, spikelets and embryos.

It is found in the membrane. In terms of biological role, may be involved in abiotic stress response through abscisic acid-dependent signaling. The sequence is that of Membrane protein PM19L from Oryza sativa subsp. japonica (Rice).